A 35-amino-acid polypeptide reads, in one-letter code: MSLRMHYTIQRPTNMSSSRGYRDHRMHLSLTSKMQ.

This Odocoileus virginianus papillomavirus 1 (DPV) protein is Probable protein L3.